The primary structure comprises 397 residues: 4-hydroxyphenylpyruvate dioxygenase (397 aa).

VOC domains lie at 18–149 (NFHH…FVEY) and 181–339 (FIDH…IFTK). 3 residues coordinate Fe cation: His-184, His-267, and Glu-350.

Belongs to the 4HPPD family. Homodimer. The cofactor is Fe cation.

The protein localises to the cytoplasm. The protein resides in the endoplasmic reticulum membrane. It localises to the golgi apparatus membrane. It catalyses the reaction 3-(4-hydroxyphenyl)pyruvate + O2 = homogentisate + CO2. The protein operates within amino-acid degradation; L-phenylalanine degradation; acetoacetate and fumarate from L-phenylalanine: step 3/6. Catalyzes the conversion of 4-hydroxyphenylpyruvic acid to homogentisic acid, one of the steps in tyrosine catabolism. The protein is 4-hydroxyphenylpyruvate dioxygenase (hpd) of Danio rerio (Zebrafish).